Reading from the N-terminus, the 141-residue chain is Acetyltransferase ECA0875 (141 aa).

Positions 1–141 (MEIRIFRQDD…GKRLIEDREY (141 aa)) constitute an N-acetyltransferase domain.

The protein belongs to the acetyltransferase family. YpeA subfamily.

In Pectobacterium atrosepticum (strain SCRI 1043 / ATCC BAA-672) (Erwinia carotovora subsp. atroseptica), this protein is Acetyltransferase ECA0875.